The sequence spans 430 residues: Probable folylpolyglutamate synthase (430 aa).

Position 37-40 (37-40 (GKET)) interacts with ATP. E132 serves as a coordination point for Mg(2+). D300 contacts ATP.

The protein belongs to the folylpolyglutamate synthase family.

Its subcellular location is the mitochondrion. It catalyses the reaction (6S)-5,6,7,8-tetrahydrofolyl-(gamma-L-Glu)(n) + L-glutamate + ATP = (6S)-5,6,7,8-tetrahydrofolyl-(gamma-L-Glu)(n+1) + ADP + phosphate + H(+). It participates in cofactor biosynthesis; tetrahydrofolylpolyglutamate biosynthesis. Its function is as follows. Conversion of folates to polyglutamate derivatives. The sequence is that of Probable folylpolyglutamate synthase (RMA1) from Saccharomyces cerevisiae (strain ATCC 204508 / S288c) (Baker's yeast).